We begin with the raw amino-acid sequence, 88 residues long: Mitochondrial import inner membrane translocase subunit TIM9 (88 aa).

The Twin CX3C motif signature appears at 35 to 59 (CFDDCVNDFTSNNLTTKETGCITKC). Cystine bridges form between C35-C59 and C39-C55.

This sequence belongs to the small Tim family. In terms of assembly, heterohexamer; composed of 3 copies of TIM9 and 3 copies of TIM10, named soluble 70 kDa complex. Associates with the TIM22 complex, whose core is composed of TIM22 and TIM54. Interacts with the transmembrane regions of multi-pass transmembrane proteins in transit.

Its subcellular location is the mitochondrion inner membrane. In terms of biological role, mitochondrial intermembrane chaperone that participates in the import and insertion of multi-pass transmembrane proteins into the mitochondrial inner membrane. Also required for the transfer of beta-barrel precursors from the TOM complex to the sorting and assembly machinery (SAM complex) of the outer membrane. Acts as a chaperone-like protein that protects the hydrophobic precursors from aggregation and guide them through the mitochondrial intermembrane space. The polypeptide is Mitochondrial import inner membrane translocase subunit TIM9 (TIM9) (Debaryomyces hansenii (strain ATCC 36239 / CBS 767 / BCRC 21394 / JCM 1990 / NBRC 0083 / IGC 2968) (Yeast)).